The following is a 272-amino-acid chain: Orotidine 5'-phosphate decarboxylase (272 aa).

K96 (proton donor) is an active-site residue.

The protein belongs to the OMP decarboxylase family. Type 2 subfamily.

It catalyses the reaction orotidine 5'-phosphate + H(+) = UMP + CO2. Its pathway is pyrimidine metabolism; UMP biosynthesis via de novo pathway; UMP from orotate: step 2/2. The chain is Orotidine 5'-phosphate decarboxylase from Christiangramia forsetii (strain DSM 17595 / CGMCC 1.15422 / KT0803) (Gramella forsetii).